The sequence spans 166 residues: Interleukin-2 (166 aa).

Positions 1-20 are cleaved as a signal peptide; sequence MYSMQLASCVTLTLVLLVNS. Thr-23 is a glycosylation site (O-linked (GalNAc...) threonine). Cys-89 and Cys-137 form a disulfide bridge.

The protein belongs to the IL-2 family.

Its subcellular location is the secreted. Its function is as follows. Cytokine produced by activated CD4-positive helper T-cells and to a lesser extend activated CD8-positive T-cells and natural killer (NK) cells that plays pivotal roles in the immune response and tolerance. Binds to a receptor complex composed of either the high-affinity trimeric IL-2R (IL2RA/CD25, IL2RB/CD122 and IL2RG/CD132) or the low-affinity dimeric IL-2R (IL2RB and IL2RG). Interaction with the receptor leads to oligomerization and conformation changes in the IL-2R subunits resulting in downstream signaling starting with phosphorylation of JAK1 and JAK3. In turn, JAK1 and JAK3 phosphorylate the receptor to form a docking site leading to the phosphorylation of several substrates including STAT5. This process leads to activation of several pathways including STAT, phosphoinositide-3-kinase/PI3K and mitogen-activated protein kinase/MAPK pathways. Functions as a T-cell growth factor and can increase NK-cell cytolytic activity as well. Promotes strong proliferation of activated B-cells and subsequently immunoglobulin production. Plays a pivotal role in regulating the adaptive immune system by controlling the survival and proliferation of regulatory T-cells, which are required for the maintenance of immune tolerance. Moreover, participates in the differentiation and homeostasis of effector T-cell subsets, including Th1, Th2, Th17 as well as memory CD8-positive T-cells. This chain is Interleukin-2 (Il2), found in Mus spretus (Western Mediterranean mouse).